We begin with the raw amino-acid sequence, 484 residues long: Protein nucleotidyltransferase YdiU (484 aa).

The ATP site is built by Gly-87, Gly-89, Arg-90, Lys-110, Asp-122, Gly-123, Arg-173, and Arg-180. The active-site Proton acceptor is the Asp-249. Mg(2+) contacts are provided by Asn-250 and Asp-259. An ATP-binding site is contributed by Asp-259.

It belongs to the SELO family. Mg(2+) serves as cofactor. It depends on Mn(2+) as a cofactor.

The catalysed reaction is L-seryl-[protein] + ATP = 3-O-(5'-adenylyl)-L-seryl-[protein] + diphosphate. The enzyme catalyses L-threonyl-[protein] + ATP = 3-O-(5'-adenylyl)-L-threonyl-[protein] + diphosphate. It catalyses the reaction L-tyrosyl-[protein] + ATP = O-(5'-adenylyl)-L-tyrosyl-[protein] + diphosphate. It carries out the reaction L-histidyl-[protein] + UTP = N(tele)-(5'-uridylyl)-L-histidyl-[protein] + diphosphate. The catalysed reaction is L-seryl-[protein] + UTP = O-(5'-uridylyl)-L-seryl-[protein] + diphosphate. The enzyme catalyses L-tyrosyl-[protein] + UTP = O-(5'-uridylyl)-L-tyrosyl-[protein] + diphosphate. Its function is as follows. Nucleotidyltransferase involved in the post-translational modification of proteins. It can catalyze the addition of adenosine monophosphate (AMP) or uridine monophosphate (UMP) to a protein, resulting in modifications known as AMPylation and UMPylation. This is Protein nucleotidyltransferase YdiU from Alcanivorax borkumensis (strain ATCC 700651 / DSM 11573 / NCIMB 13689 / SK2).